The following is a 65-amino-acid chain: Small ribosomal subunit protein eS31 (65 aa).

The Zn(2+) site is built by C36, C39, C55, and C58. The C4-type zinc-finger motif lies at 36–58 (CPKCGSVMAFHREPVPRWHCGKC).

Belongs to the eukaryotic ribosomal protein eS31 family. Part of the 30S ribosomal subunit. The cofactor is Zn(2+).

In Pyrobaculum calidifontis (strain DSM 21063 / JCM 11548 / VA1), this protein is Small ribosomal subunit protein eS31.